The following is a 641-amino-acid chain: Bifunctional protein glk (641 aa).

Residues 1 to 340 form a glucokinase region; the sequence is MSTGAQTKAA…QLSNRTGGAS (340 aa). 23-28 contacts ATP; it reads ADVGGT. In terms of domain architecture, HTH rpiR-type spans 341-417; it reads SAVFERIRQM…LKLATGLTGT (77 aa). A putative HTH-type transcriptional regulator region spans residues 341–641; that stretch reads SAVFERIRQM…SHGAAPAAKD (301 aa). The segment at residues 377-396 is a DNA-binding region (H-T-H motif); it reads IVNIARKADVSQPTVIRFCR. The SIS domain maps to 461-600; it reads AIDILNNARR…AVGVAIRRAA (140 aa). Residues 576–596 form a helical membrane-spanning segment; it reads SMISRILHLVMIDILAVGVAI.

This sequence in the N-terminal section; belongs to the bacterial glucokinase family.

The protein resides in the membrane. It catalyses the reaction D-glucose + ATP = D-glucose 6-phosphate + ADP + H(+). In Burkholderia mallei (strain ATCC 23344), this protein is Bifunctional protein glk (glk).